The sequence spans 575 residues: Adenine deaminase (575 aa).

This sequence belongs to the metallo-dependent hydrolases superfamily. Adenine deaminase family. It depends on Mn(2+) as a cofactor.

It catalyses the reaction adenine + H2O + H(+) = hypoxanthine + NH4(+). In Nitratidesulfovibrio vulgaris (strain ATCC 29579 / DSM 644 / CCUG 34227 / NCIMB 8303 / VKM B-1760 / Hildenborough) (Desulfovibrio vulgaris), this protein is Adenine deaminase.